A 129-amino-acid chain; its full sequence is Small ribosomal subunit protein uS11 (129 aa).

The protein belongs to the universal ribosomal protein uS11 family. Part of the 30S ribosomal subunit. Interacts with proteins S7 and S18. Binds to IF-3.

Its function is as follows. Located on the platform of the 30S subunit, it bridges several disparate RNA helices of the 16S rRNA. Forms part of the Shine-Dalgarno cleft in the 70S ribosome. The protein is Small ribosomal subunit protein uS11 of Pelotomaculum thermopropionicum (strain DSM 13744 / JCM 10971 / SI).